The primary structure comprises 157 residues: Crossover junction endodeoxyribonuclease RuvC (157 aa).

Active-site residues include Asp7, Glu66, and Asp139. Residues Asp7, Glu66, and Asp139 each coordinate Mg(2+).

This sequence belongs to the RuvC family. Homodimer which binds Holliday junction (HJ) DNA. The HJ becomes 2-fold symmetrical on binding to RuvC with unstacked arms; it has a different conformation from HJ DNA in complex with RuvA. In the full resolvosome a probable DNA-RuvA(4)-RuvB(12)-RuvC(2) complex forms which resolves the HJ. It depends on Mg(2+) as a cofactor.

It is found in the cytoplasm. It carries out the reaction Endonucleolytic cleavage at a junction such as a reciprocal single-stranded crossover between two homologous DNA duplexes (Holliday junction).. The RuvA-RuvB-RuvC complex processes Holliday junction (HJ) DNA during genetic recombination and DNA repair. Endonuclease that resolves HJ intermediates. Cleaves cruciform DNA by making single-stranded nicks across the HJ at symmetrical positions within the homologous arms, yielding a 5'-phosphate and a 3'-hydroxyl group; requires a central core of homology in the junction. The consensus cleavage sequence is 5'-(A/T)TT(C/G)-3'. Cleavage occurs on the 3'-side of the TT dinucleotide at the point of strand exchange. HJ branch migration catalyzed by RuvA-RuvB allows RuvC to scan DNA until it finds its consensus sequence, where it cleaves and resolves the cruciform DNA. This Helicobacter pylori (strain Shi470) protein is Crossover junction endodeoxyribonuclease RuvC.